We begin with the raw amino-acid sequence, 502 residues long: Protein krueppel (502 aa).

Disordered stretches follow at residues 115-164 (PPQG…KLSV) and 178-202 (DMYH…THDG). Low complexity-rich tracts occupy residues 119-136 (THLH…STPL) and 183-198 (SGGP…SPNS). 5 consecutive C2H2-type zinc fingers follow at residues 222–244 (FTCK…ERTH), 250–272 (FECP…MRLH), 278–300 (YHCS…LRVH), 306–328 (YTCE…MLVH), and 334–354 (FECE…NHKC). 2 disordered regions span residues 399 to 427 (NESV…SVDG) and 445 to 502 (RLPP…HQQH). Positions 410-419 (EDDGPLDLSE) are enriched in acidic residues. 3 positions are modified to phosphoserine: Ser468, Ser471, and Ser477. Acidic residues predominate over residues 482–491 (DDIDLYDLDD).

It belongs to the krueppel C2H2-type zinc-finger protein family.

It localises to the nucleus. Functionally, krueppel is a gap class segmentation protein. It is involved in the segmentation of the embryo and in the differentiation of the Malpighian tubules. The protein is Protein krueppel (Kr) of Drosophila melanogaster (Fruit fly).